Reading from the N-terminus, the 142-residue chain is Ovocleidin-17 (142 aa).

Cystine bridges form between Cys5–Cys16, Cys33–Cys138, and Cys113–Cys130. A C-type lectin domain is found at 12-139; the sequence is TPGGCLGFFS…CTERNAFVCK (128 aa). N-linked (GlcNAc...) asparagine glycosylation is present at Asn59. Residues Ser61 and Ser67 each carry the phosphoserine modification.

As to expression, expressed in the shell gland mucosa. Not detected in hen liver, magnum, isthmus, cartilage, bone or in egg white or yolk.

Its subcellular location is the secreted. It is found in the extracellular space. It localises to the extracellular matrix. May form proteinaceous networks during the construction of the eggshell which then may control the deposition of the mineral phase. The protein is Ovocleidin-17 of Gallus gallus (Chicken).